The sequence spans 139 residues: Nucleoside diphosphate kinase (139 aa).

6 residues coordinate ATP: K10, F58, R86, T92, R103, and N113. Residue H116 is the Pros-phosphohistidine intermediate of the active site.

The protein belongs to the NDK family. Homotetramer. Mg(2+) serves as cofactor.

It is found in the cytoplasm. The catalysed reaction is a 2'-deoxyribonucleoside 5'-diphosphate + ATP = a 2'-deoxyribonucleoside 5'-triphosphate + ADP. It carries out the reaction a ribonucleoside 5'-diphosphate + ATP = a ribonucleoside 5'-triphosphate + ADP. Major role in the synthesis of nucleoside triphosphates other than ATP. The ATP gamma phosphate is transferred to the NDP beta phosphate via a ping-pong mechanism, using a phosphorylated active-site intermediate. The polypeptide is Nucleoside diphosphate kinase (Phenylobacterium zucineum (strain HLK1)).